Here is a 565-residue protein sequence, read N- to C-terminus: Sulfite reductase [NADPH] hemoprotein beta-component (565 aa).

The [4Fe-4S] cluster site is built by Cys429, Cys435, Cys474, and Cys478. Cys478 serves as a coordination point for siroheme.

It belongs to the nitrite and sulfite reductase 4Fe-4S domain family. As to quaternary structure, alpha(8)-beta(8). The alpha component is a flavoprotein, the beta component is a hemoprotein. The cofactor is siroheme. It depends on [4Fe-4S] cluster as a cofactor.

The catalysed reaction is hydrogen sulfide + 3 NADP(+) + 3 H2O = sulfite + 3 NADPH + 4 H(+). It functions in the pathway sulfur metabolism; hydrogen sulfide biosynthesis; hydrogen sulfide from sulfite (NADPH route): step 1/1. Functionally, component of the sulfite reductase complex that catalyzes the 6-electron reduction of sulfite to sulfide. This is one of several activities required for the biosynthesis of L-cysteine from sulfate. In Shewanella piezotolerans (strain WP3 / JCM 13877), this protein is Sulfite reductase [NADPH] hemoprotein beta-component.